A 938-amino-acid chain; its full sequence is Protein translocase subunit SecA 1 (938 aa).

ATP is bound by residues Gln84, Gly102–Thr106, and Asp491. The interval Gln865–Arg938 is disordered. The segment covering Thr918–Arg927 has biased composition (basic and acidic residues).

The protein belongs to the SecA family. Monomer and homodimer. Part of the essential Sec protein translocation apparatus which comprises SecA, SecYEG and auxiliary proteins SecDF. Other proteins may also be involved.

It is found in the cell membrane. Its subcellular location is the cytoplasm. The enzyme catalyses ATP + H2O + cellular proteinSide 1 = ADP + phosphate + cellular proteinSide 2.. Functionally, part of the Sec protein translocase complex. Interacts with the SecYEG preprotein conducting channel. Has a central role in coupling the hydrolysis of ATP to the transfer of proteins into and across the cell membrane, serving as an ATP-driven molecular motor driving the stepwise translocation of polypeptide chains across the membrane. This chain is Protein translocase subunit SecA 1, found in Mycolicibacterium vanbaalenii (strain DSM 7251 / JCM 13017 / BCRC 16820 / KCTC 9966 / NRRL B-24157 / PYR-1) (Mycobacterium vanbaalenii).